The sequence spans 612 residues: Threonine--tRNA ligase (612 aa).

Residues 218 to 509 are catalytic; sequence DHRKLGVELG…LSEHFGGNFP (292 aa). Residues cysteine 310, histidine 361, and histidine 486 each coordinate Zn(2+).

It belongs to the class-II aminoacyl-tRNA synthetase family. In terms of assembly, homodimer. It depends on Zn(2+) as a cofactor.

It localises to the cytoplasm. The enzyme catalyses tRNA(Thr) + L-threonine + ATP = L-threonyl-tRNA(Thr) + AMP + diphosphate + H(+). Its function is as follows. Catalyzes the attachment of threonine to tRNA(Thr) in a two-step reaction: L-threonine is first activated by ATP to form Thr-AMP and then transferred to the acceptor end of tRNA(Thr). Also edits incorrectly charged L-seryl-tRNA(Thr). This Helicobacter pylori (strain ATCC 700392 / 26695) (Campylobacter pylori) protein is Threonine--tRNA ligase.